The primary structure comprises 84 residues: MAHKKGQGSTRNGRDSHSKRLGIKEFSGEVVKAGHILLRQRGTKFKPGKNVGMGRDFTLYSLVHGQVEWDGSRRLVHVKPFNTA.

A disordered region spans residues 1–21 (MAHKKGQGSTRNGRDSHSKRL). Residues 12 to 21 (NGRDSHSKRL) are compositionally biased toward basic and acidic residues.

The protein belongs to the bacterial ribosomal protein bL27 family.

This Methylacidiphilum infernorum (isolate V4) (Methylokorus infernorum (strain V4)) protein is Large ribosomal subunit protein bL27.